Consider the following 343-residue polypeptide: RNA-binding protein 43 (343 aa).

An RRM domain is found at Arg-15 to Glu-90.

The chain is RNA-binding protein 43 (Rbm43) from Mus musculus (Mouse).